A 358-amino-acid polypeptide reads, in one-letter code: Feruloyl CoA ortho-hydroxylase F6H1-2 (358 aa).

The Fe2OG dioxygenase domain occupies 200–308 (TKESLLMGSK…RISVPIFVNP (109 aa)). Residue Tyr216 participates in 2-oxoglutarate binding. Fe cation-binding residues include His231, Asp233, and His289. 2-oxoglutarate is bound by residues Arg299 and Ser301.

Belongs to the iron/ascorbate-dependent oxidoreductase family. It depends on L-ascorbate as a cofactor. Requires Fe(2+) as cofactor. As to expression, expressed at low levels in tubers, underground stems, leaves and petioles.

The enzyme catalyses (E)-feruloyl-CoA + 2-oxoglutarate + O2 = (E)-6-hydroxyferuloyl-CoA + succinate + CO2. Its pathway is phenylpropanoid metabolism. 2-oxoglutarate (OG)- and Fe(II)-dependent dioxygenase (2OGD) involved in scopoletin biosynthesis. Converts feruloyl CoA into 6'-hydroxyferuloyl CoA, and, at low efficiency, caffeoyl-CoA into 6'-hydroxycaffeate, but has no activity with p-coumaroyl-CoA. This is Feruloyl CoA ortho-hydroxylase F6H1-2 from Ipomoea batatas (Sweet potato).